The primary structure comprises 429 residues: Phosphoribosylamine--glycine ligase (429 aa).

Positions 109–316 constitute an ATP-grasp domain; that stretch reads KDFLARHNIP…LVELCLAACE (208 aa). 135 to 196 contributes to the ATP binding site; sequence LREKGAPIVI…EEFLDGEEAS (62 aa). The tract at residues 212-237 is disordered; the sequence is SQDHKRVGDKDTGPNTGGMGAYSPAP. The span at 213–223 shows a compositional bias: basic and acidic residues; the sequence is QDHKRVGDKDT. Mg(2+) contacts are provided by Glu286 and Asn288.

It belongs to the GARS family. Monomer. The cofactor is Mg(2+). Requires Mn(2+) as cofactor.

It carries out the reaction 5-phospho-beta-D-ribosylamine + glycine + ATP = N(1)-(5-phospho-beta-D-ribosyl)glycinamide + ADP + phosphate + H(+). The protein operates within purine metabolism; IMP biosynthesis via de novo pathway; N(1)-(5-phospho-D-ribosyl)glycinamide from 5-phospho-alpha-D-ribose 1-diphosphate: step 2/2. The chain is Phosphoribosylamine--glycine ligase from Escherichia coli O157:H7.